A 273-amino-acid polypeptide reads, in one-letter code: 4-hydroxy-tetrahydrodipicolinate reductase (273 aa).

Residues 12–17 (GAGGRM) and Glu-38 contribute to the NAD(+) site. Residue Arg-39 coordinates NADP(+). NAD(+) contacts are provided by residues 102–104 (GTT) and 126–129 (AANF). The active-site Proton donor/acceptor is the His-159. His-160 is a (S)-2,3,4,5-tetrahydrodipicolinate binding site. Lys-163 acts as the Proton donor in catalysis. 169-170 (GT) is a binding site for (S)-2,3,4,5-tetrahydrodipicolinate.

The protein belongs to the DapB family. Homotetramer.

The protein localises to the cytoplasm. It carries out the reaction (S)-2,3,4,5-tetrahydrodipicolinate + NAD(+) + H2O = (2S,4S)-4-hydroxy-2,3,4,5-tetrahydrodipicolinate + NADH + H(+). It catalyses the reaction (S)-2,3,4,5-tetrahydrodipicolinate + NADP(+) + H2O = (2S,4S)-4-hydroxy-2,3,4,5-tetrahydrodipicolinate + NADPH + H(+). Its pathway is amino-acid biosynthesis; L-lysine biosynthesis via DAP pathway; (S)-tetrahydrodipicolinate from L-aspartate: step 4/4. In terms of biological role, catalyzes the conversion of 4-hydroxy-tetrahydrodipicolinate (HTPA) to tetrahydrodipicolinate. This is 4-hydroxy-tetrahydrodipicolinate reductase from Enterobacter sp. (strain 638).